A 3258-amino-acid polypeptide reads, in one-letter code: Protein unc-80 homolog (3258 aa).

The segment at 152 to 173 (VENQGSPGQPCQSSSNDEEENN) is disordered. A compositionally biased stretch (low complexity) spans 155-166 (QGSPGQPCQSSS). The residue at position 257 (S257) is a Phosphoserine. Disordered stretches follow at residues 291–316 (RGNSFDGSLSSQTSQERGPSHSRASL), 449–468 (RKEDRERKGSIPFHHTGKRR), 522–560 (RRGSSDAATEMESLSARHSHSHHTLVSDLPDPSNSHGEN), 697–717 (KKSENKENETLEKRPSEGAFQ), 732–784 (PAVS…TPVS), 963–1019 (PGKK…EQMQ), 1034–1076 (KSQS…ISLR), 1404–1447 (EDSK…MSNA), and 1817–1836 (AVSAEDEEHTTEHTPNHHVP). The span at 295-307 (FDGSLSSQTSQER) shows a compositional bias: polar residues. The residue at position 525 (S525) is a Phosphoserine. The span at 698-712 (KSENKENETLEKRPS) shows a compositional bias: basic and acidic residues. The segment covering 732 to 767 (PAVSGAGDGGGEEGGGGDGGGGGGDGGGGGGGGGGP) has biased composition (gly residues). 2 stretches are compositionally biased toward basic and acidic residues: residues 769 to 780 (EKNDKNQEKDES) and 965 to 974 (KKVEENEQES). Low complexity predominate over residues 1035–1052 (SQSAASDTSSQSEQDTSE). Basic residues predominate over residues 1066–1076 (ARSRSRRISLR). Residues 1417-1429 (LKSDAGVEEKKEG) are compositionally biased toward basic and acidic residues. The next 4 helical transmembrane spans lie at 2268–2288 (PFVLQLFASVAPLLEFPDAAN), 2398–2418 (IAATAALATSLQALLYSVEVL), 2785–2805 (GLAESTSQAAYLALKVILVCF), and 2831–2851 (LALWDFLDFIVRTRIPIFVLL). The segment covering 2942 to 2964 (NTGTGTVWEQDSEPSQQASQDTL) has biased composition (polar residues). The tract at residues 2942–2982 (NTGTGTVWEQDSEPSQQASQDTLSRTDEEDEENDSISMPSV) is disordered. A Phosphoserine modification is found at S3042. A disordered region spans residues 3051–3213 (NLLVQQPLGR…DDFTGLETSS (163 aa)). Positions 3059–3068 (GRKRGLRQLR) are enriched in basic residues. A compositionally biased stretch (polar residues) spans 3088–3100 (RLSTTRRSIQPKT). Over residues 3117–3129 (PEPAAAPTDALPA) the composition is skewed to low complexity. The segment covering 3175–3186 (PTEEGEKEEDTE) has biased composition (acidic residues).

This sequence belongs to the unc-80 family. NALCN complex consists of NALCN and auxiliary subunits, UNC79, UNC80 and NACL1. These auxiliary subunits are essential for the NALCN complex function. Interacts (via N-terminus half) with NALCN; this interaction facilitates NALCN surface localization. Interacts with UNC79. UNC80 bridges NALCN to UNC79. Post-translationally, phosphorylated on tyrosine residues. Moderately expressed in fetal brain, spinal cord, skeletal muscle, thymus, spleen, fetal liver, small intestine, colon, kidney and uterus. Highly expressed in adrenal gland, prostate and testis, as well as in brain and cerebellum.

It localises to the cell membrane. Auxiliary subunit of the NALCN sodium channel complex, a voltage-gated ion channel responsible for the resting Na(+) permeability that controls neuronal excitability. Activated by neuropeptides substance P, neurotensin, and extracellular Ca(2+) that regulates neuronal excitability by controlling the sizes of NALCN-dependent sodium-leak current. UNC80 is essential for NALCN sensitivity to extracellular Ca(2+). This is Protein unc-80 homolog from Homo sapiens (Human).